We begin with the raw amino-acid sequence, 276 residues long: Foldase protein PrsA (276 aa).

Residues 1 to 18 (MRKWMIVAAVAAVFGLSA) form the signal peptide. Cysteine 19 carries N-palmitoyl cysteine lipidation. Cysteine 19 is lipidated: S-diacylglycerol cysteine. The PpiC domain maps to 133–223 (KPKIRASHIL…YGYHIIKVTD (91 aa)).

It belongs to the PrsA family.

Its subcellular location is the cell membrane. The catalysed reaction is [protein]-peptidylproline (omega=180) = [protein]-peptidylproline (omega=0). Functionally, plays a major role in protein secretion by helping the post-translocational extracellular folding of several secreted proteins. The chain is Foldase protein PrsA from Geobacillus sp. (strain WCH70).